A 395-amino-acid polypeptide reads, in one-letter code: MKIIRKDFVRNGPGSVKMMAEDSDDLWYTYNLIGPEDSVMAITFRKVGGEGRDSTPSLSRIESKYLGKKRSFTRTERVKLKLEVQVEEVDYDKDGDVMRIRGKNIMENEHVRIGAFHTLEIELKRPFLLRKENWDSLALDTLKQASDLAASADLAVVLMQEGLAQIFLAGKSVKSCGARIKTSIPWKHGAGTAGYESVLKKFFENVVQAFLKHVDFSVVRCAVIASPGFTKDQFHRHLLLEAERRQLRPILENKSRFILVHTNSGYKHSLSEVLHDPNVMNMIKDTKAAKEVKALNDFFTMFSNDPNRACYGPKHVEVAHERMAIQTLLIIDGLFRNSDVKTRKKYVDFVESVKDSGGEVFIFSSMHASGEQLAQHTGIAAILRFPLPDLEDIEM.

Belongs to the eukaryotic release factor 1 family. Pelota subfamily. The cofactor is a divalent metal cation.

Its subcellular location is the cytoplasm. The protein resides in the nucleus. Component of the Pelota-HBS1L complex, a complex that recognizes stalled ribosomes and triggers the No-Go Decay (NGD) pathway. In the Pelota-HBS1L complex, pelo recognizes ribosomes stalled at the 3' end of an mRNA and engages stalled ribosomes by destabilizing mRNA in the mRNA channel. Following ribosome-binding, the Pelota-HBS1L complex promotes the disassembly of stalled ribosomes, followed by degradation of damaged mRNAs as part of the NGD pathway. In Arabidopsis thaliana (Mouse-ear cress), this protein is Protein PELOTA 2 (PEL2).